A 232-amino-acid polypeptide reads, in one-letter code: Octanoyltransferase (232 aa).

One can recognise a BPL/LPL catalytic domain in the interval 44 to 219 (EHTADEVWVV…QLARQFGLVL (176 aa)). Residues 83–90 (RGGQVTYH), 150–152 (ALG), and 163–165 (GLS) each bind substrate. Residue Cys181 is the Acyl-thioester intermediate of the active site.

Belongs to the LipB family.

The protein localises to the cytoplasm. The enzyme catalyses octanoyl-[ACP] + L-lysyl-[protein] = N(6)-octanoyl-L-lysyl-[protein] + holo-[ACP] + H(+). The protein operates within protein modification; protein lipoylation via endogenous pathway; protein N(6)-(lipoyl)lysine from octanoyl-[acyl-carrier-protein]: step 1/2. In terms of biological role, catalyzes the transfer of endogenously produced octanoic acid from octanoyl-acyl-carrier-protein onto the lipoyl domains of lipoate-dependent enzymes. Lipoyl-ACP can also act as a substrate although octanoyl-ACP is likely to be the physiological substrate. The sequence is that of Octanoyltransferase from Xanthomonas euvesicatoria pv. vesicatoria (strain 85-10) (Xanthomonas campestris pv. vesicatoria).